A 173-amino-acid polypeptide reads, in one-letter code: Nascent polypeptide-associated complex subunit alpha (173 aa).

Residues 21-85 (VVHAEKAQKL…VTVEDMAAQA (65 aa)) form the NAC-A/B domain. Residues 89-117 (NESQKQATETKEEAAITEESGDAQPADTA) are disordered. Position 122 is a phosphoserine (Ser122). A UBA domain is found at 134–171 (VDAKDIELVMAQANVSRAKAVTALKENNSDVVNAIMSL).

The protein belongs to the NAC-alpha family. As to quaternary structure, part of the nascent polypeptide-associated complex (NAC), consisting of ucp15 and btf3. NAC associates with ribosomes via btf3.

Its subcellular location is the cytoplasm. The protein resides in the nucleus. Its function is as follows. Component of the nascent polypeptide-associated complex (NAC), a dynamic component of the ribosomal exit tunnel, protecting the emerging polypeptides from interaction with other cytoplasmic proteins to ensure appropriate nascent protein targeting. The NAC complex also promotes mitochondrial protein import by enhancing productive ribosome interactions with the outer mitochondrial membrane and blocks the inappropriate interaction of ribosomes translating non-secretory nascent polypeptides with translocation sites in the membrane of the endoplasmic reticulum. Ucp15 may also be involved in transcription regulation. The sequence is that of Nascent polypeptide-associated complex subunit alpha (egd2) from Schizosaccharomyces pombe (strain 972 / ATCC 24843) (Fission yeast).